The primary structure comprises 428 residues: Anaerobic glycerol-3-phosphate dehydrogenase subunit B (428 aa).

The protein belongs to the anaerobic G-3-P dehydrogenase subunit B family. As to quaternary structure, composed of a catalytic GlpA/B dimer and of membrane bound GlpC. Requires FMN as cofactor.

The enzyme catalyses a quinone + sn-glycerol 3-phosphate = dihydroxyacetone phosphate + a quinol. It functions in the pathway polyol metabolism; glycerol degradation via glycerol kinase pathway; glycerone phosphate from sn-glycerol 3-phosphate (anaerobic route): step 1/1. Functionally, conversion of glycerol 3-phosphate to dihydroxyacetone. Uses fumarate or nitrate as electron acceptor. The sequence is that of Anaerobic glycerol-3-phosphate dehydrogenase subunit B from Actinobacillus pleuropneumoniae serotype 5b (strain L20).